A 905-amino-acid chain; its full sequence is Alanine--tRNA ligase (905 aa).

Residues histidine 582, histidine 586, cysteine 687, and histidine 691 each contribute to the Zn(2+) site.

The protein belongs to the class-II aminoacyl-tRNA synthetase family. Requires Zn(2+) as cofactor.

The protein localises to the cytoplasm. The catalysed reaction is tRNA(Ala) + L-alanine + ATP = L-alanyl-tRNA(Ala) + AMP + diphosphate. Functionally, catalyzes the attachment of alanine to tRNA(Ala) in a two-step reaction: alanine is first activated by ATP to form Ala-AMP and then transferred to the acceptor end of tRNA(Ala). Also edits incorrectly charged Ser-tRNA(Ala) and Gly-tRNA(Ala) via its editing domain. The chain is Alanine--tRNA ligase from Mycoplasma mobile (strain ATCC 43663 / 163K / NCTC 11711) (Mesomycoplasma mobile).